Here is a 356-residue protein sequence, read N- to C-terminus: Histidinol-phosphate aminotransferase 2 (356 aa).

At Lys213 the chain carries N6-(pyridoxal phosphate)lysine.

Belongs to the class-II pyridoxal-phosphate-dependent aminotransferase family. Histidinol-phosphate aminotransferase subfamily. Homodimer. It depends on pyridoxal 5'-phosphate as a cofactor.

The enzyme catalyses L-histidinol phosphate + 2-oxoglutarate = 3-(imidazol-4-yl)-2-oxopropyl phosphate + L-glutamate. It participates in amino-acid biosynthesis; L-histidine biosynthesis; L-histidine from 5-phospho-alpha-D-ribose 1-diphosphate: step 7/9. This Burkholderia mallei (strain ATCC 23344) protein is Histidinol-phosphate aminotransferase 2.